The sequence spans 216 residues: MRDQFISLALILCVLHSACGLYFHISETERKCFIEEVPDETTVIVNYKVELYDPRSNGFMPSSPGIGMHVEVRDSDDKIVLSRVYSSQGRISFTSHTPGEHVICMFSNSTAWFSGAQLRVHLDIQVGEHAIDYAHVAQKEKLTELQLRIRQLLDQVEQITKEQNYQRYREERFRHTSESTNSRVLWWSLAQTVVLVCMGFWQMRHLKSFFEAKKLV.

The first 20 residues, Met-1–Gly-20, serve as a signal peptide directing secretion. The Lumenal portion of the chain corresponds to Leu-21 to Ser-182. In terms of domain architecture, GOLD spans Arg-30–Val-126. Residues Ala-134 to Asn-164 adopt a coiled-coil conformation. Residues Arg-183–Met-203 form a helical membrane-spanning segment. Topologically, residues Arg-204–Val-216 are cytoplasmic. The short motif at Lys-213–Val-216 is the Prevents secretion from ER element.

Belongs to the EMP24/GP25L family.

The protein resides in the endoplasmic reticulum membrane. Eca and bai are essential, though not redundant, for dorsoventral patterning of the embryo. Specifically required during early embryogenesis for the activity of maternal tkv, while the zygotic tkv is not affected. Involved in Golgi organization. The sequence is that of Transmembrane emp24 domain-containing protein eca from Drosophila melanogaster (Fruit fly).